The sequence spans 542 residues: Signal peptide peptidase-like 5 (542 aa).

An N-terminal signal peptide occupies residues 1–23; sequence MAAATAAVFALLMASALAGAAAG. At 24–192 the chain is on the lumenal side; the sequence is GDIVHHDDEA…PDRPVVDTAE (169 aa). 2 N-linked (GlcNAc...) asparagine glycosylation sites follow: asparagine 79 and asparagine 145. The PA domain maps to 92-167; the sequence is CTSPKEKVSG…LPRDAGFALH (76 aa). A helical transmembrane segment spans residues 193 to 213; sequence VFLWLMAVGTVLCASYWSAWS. Topologically, residues 214-245 are cytoplasmic; the sequence is AREALCEQEKLLKDGREVLLNVENGSSSGMID. Residues 246–266 traverse the membrane as a helical segment; that stretch reads INVASAIMFVVVASCFLIMLY. Topologically, residues 267-275 are lumenal; sequence KMMSSWFVE. A helical transmembrane segment spans residues 276–296; sequence LLVVIFCVGGVEGLQTCLVAL. The Cytoplasmic portion of the chain corresponds to 297 to 316; sequence LSRWFRAASESFFKVPFFGA. Residues 317 to 337 form a helical membrane-spanning segment; the sequence is VSYLTLAVSPFCIVFAVLWAV. At 338–342 the chain is on the lumenal side; the sequence is HRHFT. A helical membrane pass occupies residues 343–363; it reads YAWIGQDILGIALIITVIQIV. At 364 to 367 the chain is on the cytoplasmic side; that stretch reads RVPN. The chain crosses the membrane as a helical span at residues 368–388; that stretch reads LKVGSVLLSCAFFYDIFWVFV. Aspartate 382 is an active-site residue. At 389 to 426 the chain is on the lumenal side; that stretch reads SKRWFHESVMIVVARGDKTDEDGVPMLLKIPRMFDPWG. The helical transmembrane segment at 427–447 threads the bilayer; sequence GYSIIGFGDILLPGLLVAFAL. Aspartate 435 is an active-site residue. The Cytoplasmic portion of the chain corresponds to 448–459; that stretch reads RYDWAAKKSLQT. Residues 460–480 traverse the membrane as a helical segment; sequence GYFLWSMVAYGSGLLITYVAL. At 481–486 the chain is on the lumenal side; that stretch reads NLMDGH. A helical membrane pass occupies residues 487–507; that stretch reads GQPALLYIVPFTLGALISLGW. A PAL motif is present at residues 489–491; it reads PAL. The Cytoplasmic segment spans residues 508–542; it reads KRGELWNLWSKGEPERVCPHHMHMQPQPKTPPLVQ.

This sequence belongs to the peptidase A22B family. Post-translationally, glycosylated.

The protein localises to the endosome membrane. Functionally, intramembrane-cleaving aspartic protease (I-CLiP) that cleaves type II membrane signal peptides in the hydrophobic plane of the membrane. This is Signal peptide peptidase-like 5 (SPPL5) from Oryza sativa subsp. japonica (Rice).